Here is a 340-residue protein sequence, read N- to C-terminus: Histidinol-phosphate aminotransferase (340 aa).

Residue K204 is modified to N6-(pyridoxal phosphate)lysine.

Belongs to the class-II pyridoxal-phosphate-dependent aminotransferase family. Histidinol-phosphate aminotransferase subfamily. Pyridoxal 5'-phosphate serves as cofactor.

It carries out the reaction L-histidinol phosphate + 2-oxoglutarate = 3-(imidazol-4-yl)-2-oxopropyl phosphate + L-glutamate. It functions in the pathway amino-acid biosynthesis; L-histidine biosynthesis; L-histidine from 5-phospho-alpha-D-ribose 1-diphosphate: step 7/9. This chain is Histidinol-phosphate aminotransferase, found in Thermococcus gammatolerans (strain DSM 15229 / JCM 11827 / EJ3).